The chain runs to 568 residues: Urease subunit beta (568 aa).

One can recognise a Urease domain in the interval 131-568 (GGIDTHIHFI…LSLAQLYNLF (438 aa)). Ni(2+)-binding residues include His136, His138, and Lys219. The residue at position 219 (Lys219) is an N6-carboxylysine. Residue His221 coordinates substrate. Residues His248 and His274 each contribute to the Ni(2+) site. Catalysis depends on His321, which acts as the Proton donor. A Ni(2+)-binding site is contributed by Asp361.

The protein belongs to the metallo-dependent hydrolases superfamily. Urease alpha subunit family. In terms of assembly, heterohexamer of 3 UreA (alpha) and 3 UreB (beta) subunits. Ni cation is required as a cofactor. Post-translationally, carboxylation allows a single lysine to coordinate two nickel ions.

The protein localises to the cytoplasm. It catalyses the reaction urea + 2 H2O + H(+) = hydrogencarbonate + 2 NH4(+). It functions in the pathway nitrogen metabolism; urea degradation; CO(2) and NH(3) from urea (urease route): step 1/1. This chain is Urease subunit beta, found in Helicobacter heilmannii.